The chain runs to 761 residues: Autophagy-related protein 13 (761 aa).

Low complexity-rich tracts occupy residues 1-10, 290-303, and 327-340; these read MLSDFKQQQQ, SSSV…TSLK, and STSP…ISQP. Disordered regions lie at residues 1-25, 277-367, 398-456, 488-507, 544-642, and 691-761; these read MLSD…HDDT, FHKR…SNKS, ISGT…QSDL, DLRL…NMSI, HSSR…SSIS, and YQNV…SRNF. Polar residues-rich tracts occupy residues 344–367 and 400–411; these read PIQN…SNKS and GTSVPRSFSSST. Residues 429–444 show a composition bias toward low complexity; that stretch reads RFASSFGSRASRRYSS. Positions 445–456 are enriched in polar residues; sequence TSIRQQTPQSDL. Residues 566–590 are compositionally biased toward low complexity; sequence QQQQQQQQNQQQSQSPHTNTTSSIH. A compositionally biased stretch (basic and acidic residues) spans 600-613; sequence RMKDARPRSEDHQQ. Positions 614-631 are enriched in polar residues; it reads TKFSAARRSSNISPTTAV. The segment covering 632–642 has biased composition (low complexity); sequence PSSIGTPSSIS. Acidic residues predominate over residues 695-709; that stretch reads FDDDDEDDNDEEEGD. A compositionally biased stretch (basic and acidic residues) spans 710–720; sequence REGNQLHEGRN. A compositionally biased stretch (polar residues) spans 721 to 730; it reads STESSQNQSK.

The protein belongs to the ATG13 family. Fungi subfamily. In terms of assembly, interacts with ATG1 to form the ATG1-ATG13 kinase complex.

It is found in the cytoplasm. Its subcellular location is the preautophagosomal structure. Its function is as follows. Plays a key role in autophagy. Activates the atg1 kinase in a nutritional condition dependent manner through the TOR pathway, leading to autophagy. Also involved in cytoplasm to vacuole transport (Cvt) and more specifically in Cvt vesicle formation. Seems to play a role in the switching machinery regulating the conversion between the Cvt pathway and autophagy. Finally, plays an important role in biofilm formation and resistance to antifungal compounds such as fluconazole, itraconazole, terbinafine and caspofungin. This is Autophagy-related protein 13 from Candida albicans (strain SC5314 / ATCC MYA-2876) (Yeast).